The sequence spans 358 residues: Aromatic amino acid aminotransferase (358 aa).

K214 is subject to N6-(pyridoxal phosphate)lysine.

It belongs to the class-II pyridoxal-phosphate-dependent aminotransferase family. As to quaternary structure, homodimer. The cofactor is pyridoxal 5'-phosphate.

It catalyses the reaction an aromatic L-alpha-amino acid + 2-oxoglutarate = an aromatic oxo-acid + L-glutamate. In terms of biological role, aminotransferase that catalyzes the conversion of aromatic amino acids and 2-oxoglutarate into corresponding aromatic oxo acids and L-glutamate. The protein is Aromatic amino acid aminotransferase of Rhodococcus opacus (strain B4).